The primary structure comprises 851 residues: Glycogen phosphorylase, liver form (851 aa).

Residue A2 is modified to N-acetylalanine. Phosphoserine; by PHK; in form phosphorylase a is present on S15. Residues 43–45 (DRN), Y76, and R310 contribute to the AMP site. K364 carries the N6-succinyllysine modification. The residue at position 470 (K470) is an N6-acetyllysine. Phosphoserine is present on residues S524, S561, and S639. K681 carries the post-translational modification N6-(pyridoxal phosphate)lysine. At K796 the chain carries N6-acetyllysine.

The protein belongs to the glycogen phosphorylase family. Homodimer; enzymatically active. Interacts with PPP1R3B; recruits the phosphatase PP1 which dephosphorylates and inactivates PYGL/glycogen phosphorylase. The cofactor is pyridoxal 5'-phosphate. In terms of processing, acetylation, which is up-regulated by glucose and insulin and down-regulated by glucagon, inhibits the glycogen phosphorylase activity by promoting PPP1R3B-mediated recruitment of phosphatase PP1 and Ser-15 dephosphorylation. Phosphorylation at Ser-15 converts inactive phosphorylase b into active phosphorylase a. Dephosphorylation of Ser-15 by phosphatase PP1 inactivates the enzyme.

The protein localises to the cytoplasm. Its subcellular location is the cytosol. It carries out the reaction [(1-&gt;4)-alpha-D-glucosyl](n) + phosphate = [(1-&gt;4)-alpha-D-glucosyl](n-1) + alpha-D-glucose 1-phosphate. Its activity is regulated as follows. Allosterically regulated through the non-covalent binding of metabolites, being activated by AMP and inhibited by ATP, ADP, and glucose-6-phosphate. The activity is also controlled by post-translational modifications including phosphorylation and acetylation. Functionally, allosteric enzyme that catalyzes the rate-limiting step in glycogen catabolism, the phosphorolytic cleavage of glycogen to produce glucose-1-phosphate, and plays a central role in maintaining cellular and organismal glucose homeostasis. This Ovis aries (Sheep) protein is Glycogen phosphorylase, liver form.